The primary structure comprises 914 residues: Polyribonucleotide nucleotidyltransferase (914 aa).

The interval 407–427 is disordered; the sequence is YMHNYEMPPYSTGETGRVGSP. Mg(2+) is bound by residues aspartate 521 and aspartate 527. The KH domain occupies 587–646; that stretch reads PRIITTSVPVEKIGEVIGPKGKMINQIQEDTGAEIAIEDDGTVFISSEGGEAAKKAKSII. One can recognise an S1 motif domain in the interval 658–730; that stretch reads GETYNGKVVK…DRGKISLAIP (73 aa). The disordered stretch occupies residues 727-914; sequence LAIPGFEDQE…VRRDFDPFED (188 aa). 3 stretches are compositionally biased toward basic and acidic residues: residues 742–789, 797–865, and 873–899; these read SRGD…RRSD, DRPR…DRRG, and RGSD…ERTE.

Belongs to the polyribonucleotide nucleotidyltransferase family. The cofactor is Mg(2+).

The protein resides in the cytoplasm. The catalysed reaction is RNA(n+1) + phosphate = RNA(n) + a ribonucleoside 5'-diphosphate. In terms of biological role, involved in mRNA degradation. Catalyzes the phosphorolysis of single-stranded polyribonucleotides processively in the 3'- to 5'-direction. The polypeptide is Polyribonucleotide nucleotidyltransferase (Bifidobacterium longum subsp. infantis (strain ATCC 15697 / DSM 20088 / JCM 1222 / NCTC 11817 / S12)).